A 493-amino-acid polypeptide reads, in one-letter code: Chitobiosyldiphosphodolichol beta-mannosyltransferase (493 aa).

At 1–71 (MNRVAVVVLG…PISMSNSFKK (71 aa)) the chain is on the lumenal side. Residues 72-92 (IPLISIFMWPLLAICKVLFQI) form a helical membrane-spanning segment. Over 93–109 (IQLMYVLLVKVPSPLNT) the chain is Cytoplasmic. Residues 110–130 (ILVQSPPAIPTIFVMQIVCWI) constitute an intramembrane region (helical). At 131 to 493 (RGVHLVIDWH…SSSNSKSKKD (363 aa)) the chain is on the cytoplasmic side. A disordered region spans residues 462–493 (FIPSSSSSSSSSSSSSSSSSSSSSSNSKSKKD). The segment covering 465–493 (SSSSSSSSSSSSSSSSSSSSSSNSKSKKD) has biased composition (low complexity).

This sequence belongs to the glycosyltransferase group 1 family. Glycosyltransferase 33 subfamily.

The protein resides in the endoplasmic reticulum membrane. It catalyses the reaction an N,N'-diacetylchitobiosyl-diphospho-di-trans,poly-cis-dolichol + GDP-alpha-D-mannose = a beta-D-Man-(1-&gt;4)-beta-D-GlcNAc-(1-&gt;4)-alpha-D-GlcNAc-diphospho-di-trans,poly-cis-dolichol + GDP + H(+). The protein operates within protein modification; protein glycosylation. Functionally, participates in the formation of the lipid-linked precursor oligosaccharide for N-glycosylation. Involved in assembling the dolichol-pyrophosphate-GlcNAc(2)-Man(5) intermediate on the cytoplasmic surface of the ER. This chain is Chitobiosyldiphosphodolichol beta-mannosyltransferase (alg1), found in Dictyostelium discoideum (Social amoeba).